A 307-amino-acid polypeptide reads, in one-letter code: Heparan sulfate glucosamine 3-O-sulfotransferase 1 (307 aa).

A signal peptide spans 1–20 (MAALLLGAVLLVAQPQLVPS). Residue N48 is glycosylated (N-linked (GlcNAc...) asparagine). Residues 64-68 (KGGTR), R147, and S155 each bind 3'-phosphoadenylyl sulfate. N192, N242, and N249 each carry an N-linked (GlcNAc...) asparagine glycan. Y255 is a binding site for 3'-phosphoadenylyl sulfate. C256 and C265 are oxidised to a cystine. Residue 270–274 (KGRAH) participates in 3'-phosphoadenylyl sulfate binding.

This sequence belongs to the sulfotransferase 1 family. In terms of tissue distribution, highly expressed in the brain and kidney and weakly expressed in the heart, lung and placenta.

The protein resides in the golgi apparatus lumen. It catalyses the reaction alpha-D-glucosaminyl-[heparan sulfate](n) + 3'-phosphoadenylyl sulfate = 3-sulfo-alpha-D-glucosaminyl-[heparan sulfate](n) + adenosine 3',5'-bisphosphate + H(+). Its function is as follows. Sulfotransferase that utilizes 3'-phospho-5'-adenylyl sulfate (PAPS) to catalyze the transfer of a sulfo group to position 3 of glucosamine residues in heparan. Catalyzes the rate limiting step in the biosynthesis of heparan sulfate (HSact). This modification is a crucial step in the biosynthesis of anticoagulant heparan sulfate as it completes the structure of the antithrombin pentasaccharide binding site. The sequence is that of Heparan sulfate glucosamine 3-O-sulfotransferase 1 (HS3ST1) from Homo sapiens (Human).